We begin with the raw amino-acid sequence, 445 residues long: ATP synthase subunit b-delta (445 aa).

An ATP synthase subunit b region spans residues 1–168 (MSTFIGQLVG…PAAAEVERPV (168 aa)). Residues 4–24 (FIGQLVGFAAIVFLVWRYVVP) traverse the membrane as a helical segment. The segment at 169 to 445 (AAKMRSASRR…LTAAEAQLPD (277 aa)) is ATP synthase subunit delta.

It in the N-terminal section; belongs to the ATPase B chain family. This sequence in the C-terminal section; belongs to the ATPase delta chain family. As to quaternary structure, F-type ATPases have 2 components, F(1) - the catalytic core - and F(0) - the membrane proton channel. F(1) has five subunits: alpha(3), beta(3), gamma(1), delta(1), epsilon(1). F(0) has three main subunits: a(1), b(2) and c(10-14). The alpha and beta chains form an alternating ring which encloses part of the gamma chain. F(1) is attached to F(0) by a central stalk formed by the gamma and epsilon chains, while a peripheral stalk is formed by the delta and b chains.

Its subcellular location is the cell membrane. In terms of biological role, f(1)F(0) ATP synthase produces ATP from ADP in the presence of a proton or sodium gradient. F-type ATPases consist of two structural domains, F(1) containing the extramembraneous catalytic core and F(0) containing the membrane proton channel, linked together by a central stalk and a peripheral stalk. During catalysis, ATP synthesis in the catalytic domain of F(1) is coupled via a rotary mechanism of the central stalk subunits to proton translocation. Its function is as follows. This fusion protein includes a component of the F(0) channel (subunit b) and of the F(1) subunit (subunit delta). Two copies of subunit b and one of delta together form the peripheral 'stator' stalk which links F(1) to F(0). The chain is ATP synthase subunit b-delta (atpFH) from Mycobacterium ulcerans (strain Agy99).